The chain runs to 251 residues: Phosphate import ATP-binding protein PstB 2 (251 aa).

The ABC transporter domain maps to 5-246 (ITSKDVHLSY…PKKQITSDYL (242 aa)). Residue 37 to 44 (GPSGCGKS) participates in ATP binding.

The protein belongs to the ABC transporter superfamily. Phosphate importer (TC 3.A.1.7) family. The complex is composed of two ATP-binding proteins (PstB), two transmembrane proteins (PstC and PstA) and a solute-binding protein (PstS).

The protein resides in the cell membrane. It carries out the reaction phosphate(out) + ATP + H2O = ADP + 2 phosphate(in) + H(+). In terms of biological role, part of the ABC transporter complex PstSACB involved in phosphate import. Responsible for energy coupling to the transport system. In Lactobacillus johnsonii (strain CNCM I-12250 / La1 / NCC 533), this protein is Phosphate import ATP-binding protein PstB 2.